We begin with the raw amino-acid sequence, 2228 residues long: Genome polyprotein (2228 aa).

Positions 55-76 are disordered; the sequence is TAEVGSHQPEPLKTSVDKPGSK. Short sequence motifs ((L)YPX(n)L motif) lie at residues 167-171 and 200-205; these read YPHGL and YPVWEL. Positions 766–836 are involved in P1-2A pentamerization; the sequence is MMDRIALGDL…PRKIKGVFSQ (71 aa). A helical membrane pass occupies residues 1011–1031; sequence TVEIINTVLCFVKSGILLYVI. Residues 1043 to 1070 are membrane-penetrating ability; sequence IGLLRVMNYADIGCSVISCGKVFSKMLE. A coiled-coil region spans residues 1127–1153; it reads NKKDVLNILKDHQQKIERAIEEADNFC. In terms of domain architecture, SF3 helicase spans 1204–1366; sequence HQKLKNLGSI…SFFKNPHNDM (163 aa). An ATP-binding site is contributed by 1230-1237; it reads GKRGGGKS. A helical transmembrane segment spans residues 1462 to 1482; the sequence is WVAVGAAVGVLGVLVGGWYVY. Tyr1499 is modified (O-(5'-phospho-RNA)-tyrosine). Residues 1514–1728 form the Peptidase C3 domain; sequence DPVESQSTLE…VAKLVTQEMF (215 aa). Catalysis depends on for protease 3C activity residues His1563, Asp1603, and Cys1691. Residues 1977 to 2098 enclose the RdRp catalytic domain; it reads DVGLDLDFSA…VFSRQVQIDN (122 aa).

This sequence belongs to the picornaviridae polyprotein family. Homodimer. Homomultimer; probably interacts with membranes in a multimeric form. Seems to assemble into amyloid-like fibers. As to quaternary structure, homodimer. Monomer. Interacts with protein 3CD. In terms of assembly, interacts with host ACBD3. Interacts with protein 3AB. As to quaternary structure, interacts with human MAVS. In terms of assembly, homodimer; disulfide-linked. Homopentamer. Homooligomer. As to quaternary structure, interacts with capsid protein VP2. Interacts with capsid protein VP3. In terms of assembly, interacts with capsid protein VP1. Interacts with capsid protein VP3. Interacts with capsid protein VP1. Interacts with capsid protein VP2. Specific enzymatic cleavages by viral protease in vivo yield a variety of precursors and mature proteins. Polyprotein processing intermediates are produced, such as P1-2A which is a functional precursor of the structural proteins, VP0 which is a VP4-VP2 precursor, VP1-2A precursor, 3ABC precursor which is a stable and catalytically active precursor of 3A, 3B and 3C proteins, 3AB and 3CD precursors. The assembly signal 2A is removed from VP1-2A by a host protease, possibly host Cathepsin L. This cleavage occurs over a region of 3 amino-acids probably generating VP1 proteins with heterogeneous C-termini. Post-translationally, during virion maturation, immature virions are rendered infectious following cleavage of VP0 into VP4 and VP2. This maturation seems to be an autocatalytic event triggered by the presence of RNA in the capsid and is followed by a conformational change of the particle. In terms of processing, the assembly signal 2A is removed from VP1-2A by a host protease, possibly host Cathepsin L in naked virions. This cleavage does not occur in enveloped virions. This cleavage occurs over a region of 3 amino-acids probably generating VP1 proteins with heterogeneous C-termini. VPg is uridylylated prior to priming replication into VPg-pUpU. Post-translationally, unlike other picornaviruses, does not seem to be myristoylated.

Its subcellular location is the virion. It localises to the host endosome. The protein localises to the host multivesicular body. It is found in the host membrane. The protein resides in the host mitochondrion outer membrane. Its subcellular location is the host cytoplasm. It localises to the host cytoplasmic vesicle membrane. The catalysed reaction is RNA(n) + a ribonucleoside 5'-triphosphate = RNA(n+1) + diphosphate. The enzyme catalyses a ribonucleoside 5'-triphosphate + H2O = a ribonucleoside 5'-diphosphate + phosphate + H(+). It catalyses the reaction Selective cleavage of Gln-|-Gly bond in the poliovirus polyprotein. In other picornavirus reactions Glu may be substituted for Gln, and Ser or Thr for Gly.. Functionally, capsid proteins VP1, VP2, and VP3 form a closed capsid enclosing the viral positive strand RNA genome. All these proteins contain a beta-sheet structure called beta-barrel jelly roll. Together they form an icosahedral capsid (T=3) composed of 60 copies of each VP1, VP2, and VP3, with a diameter of approximately 300 Angstroms. VP1 is situated at the 12 fivefold axes, whereas VP2 and VP3 are located at the quasi-sixfold axes. The naked capsid interacts with the host receptor HAVCR1 to provide virion attachment to and probably entry into the target cell. In terms of biological role, VP0 precursor is a component of the immature procapsids. Plays a role in the assembly of the 12 pentamers into an icosahedral structure. Has not been detected in mature virions, supposedly owing to its small size. Its function is as follows. Precursor component of immature procapsids that corresponds to an extended form of the structural protein VP1. After maturation, possibly by the host Cathepsin L, the assembly signal 2A is cleaved to give rise to the mature VP1 protein. Functionally, functions as a viroporin. Affects membrane integrity and causes an increase in membrane permeability. Involved in host intracellular membrane rearrangements probably to give rise to the viral factories. Does not disrupt calcium homeostasis or glycoprotein trafficking. Antagonizes the innate immune response of the host by suppressing IFN-beta synthesis, which it achieves by interfering with the RIG-I/IFIH1 pathway. In terms of biological role, affects membrane integrity and causes an increase in membrane permeability. Associates with and induces structural rearrangements of intracellular membranes. Displays RNA-binding activity. Its function is as follows. The precursor 3ABC is targeted to the mitochondrial membrane where protease 3C activity cleaves and inhibits the host antiviral protein MAVS, thereby disrupting activation of IRF3 through the IFIH1/MDA5 pathway. In vivo, the protease activity of 3ABC precursor is more efficient in cleaving the 2BC precursor than that of protein 3C. The 3ABC precursor may therefore play a role in the proteolytic processing of the polyprotein. Possible viroporin. Functionally, interacts with the 3CD precursor and with RNA structures found at both the 5'- and 3'-termini of the viral genome. Since the 3AB precursor contains the hydrophobic domain 3A, it probably anchors the whole viral replicase complex to intracellular membranes on which viral RNA synthesis occurs. In terms of biological role, may serve as membrane anchor to the 3AB and 3ABC precursors via its hydrophobic domain. May interact with RNA. Acts as a primer for viral RNA replication and remains covalently bound to viral genomic RNA. VPg is uridylylated prior to priming replication into VPg-pUpU. The VPg-pUpU is then used as primer on the genomic RNA poly(A) by the RNA-dependent RNA polymerase to replicate the viral genome. Its function is as follows. Cysteine protease that generates mature viral proteins from the precursor polyprotein. In addition to its proteolytic activity, it binds to viral RNA, and thus influences viral genome replication. RNA and substrate bind cooperatively to the protease. Cleaves IKBKG/NEMO to impair innate immune signaling. Cleaves host PABPC1 which may participate in the switch of viral translation to RNA synthesis. Functionally, interacts with the 3AB precursor and with RNA structures found at both the 5'- and 3'-termini of the viral genome. Disrupts TLR3 signaling by degrading the host adapter protein TICAM1/TRIF. In terms of biological role, RNA-directed RNA polymerase 3D-POL replicates genomic and antigenomic RNA by recognizing replications specific signals. This is Genome polyprotein from Human hepatitis A virus genotype IIIA (isolate NOR-21) (HHAV).